The primary structure comprises 120 residues: uncharacterized protein (120 aa).

Residues 3–120 form the N-acetyltransferase domain; sequence IRYKKAFEKI…EKCEICHGSE (118 aa).

This is an uncharacterized protein from Bacillus methanolicus.